We begin with the raw amino-acid sequence, 95 residues long: Large ribosomal subunit protein uL23 (95 aa).

It belongs to the universal ribosomal protein uL23 family. In terms of assembly, part of the 50S ribosomal subunit. Contacts protein L29, and trigger factor when it is bound to the ribosome.

In terms of biological role, one of the early assembly proteins it binds 23S rRNA. One of the proteins that surrounds the polypeptide exit tunnel on the outside of the ribosome. Forms the main docking site for trigger factor binding to the ribosome. The chain is Large ribosomal subunit protein uL23 from Bacillus subtilis (strain 168).